The primary structure comprises 347 residues: Selenide, water dikinase (347 aa).

Cys17 is an active-site residue. ATP is bound by residues Lys20 and 48 to 50; that span reads TRD. Position 51 (Asp51) interacts with Mg(2+). ATP is bound by residues Asp68, Asp91, and 139 to 141; that span reads GHS. Asp91 is a binding site for Mg(2+). Residue Asp227 participates in Mg(2+) binding.

The protein belongs to the selenophosphate synthase 1 family. Class I subfamily. In terms of assembly, homodimer. Requires Mg(2+) as cofactor.

It catalyses the reaction hydrogenselenide + ATP + H2O = selenophosphate + AMP + phosphate + 2 H(+). In terms of biological role, synthesizes selenophosphate from selenide and ATP. In Escherichia coli O9:H4 (strain HS), this protein is Selenide, water dikinase.